The sequence spans 213 residues: Adenylate kinase (213 aa).

10 to 15 provides a ligand contact to ATP; the sequence is GAGKGT. The NMP stretch occupies residues 30-59; that stretch reads AVGDIFRTIIKTSTSEAELINNYVKQGALI. AMP-binding positions include Arg36, 57–59, 85–88, and Gln92; these read ALI and GYPR. The LID stretch occupies residues 123–161; the sequence is GRYSCKNCGKIYNIHFLQPKIEHVCDVCSSSVFDYRKDD. ATP is bound at residue Arg124. Positions 127 and 130 each coordinate Zn(2+). 133–134 is a binding site for ATP; sequence IY. Residues Cys147 and Cys150 each coordinate Zn(2+). Residues Arg158 and Arg169 each contribute to the AMP site. Lys197 is an ATP binding site.

Belongs to the adenylate kinase family. Monomer.

Its subcellular location is the cytoplasm. The catalysed reaction is AMP + ATP = 2 ADP. The protein operates within purine metabolism; AMP biosynthesis via salvage pathway; AMP from ADP: step 1/1. Catalyzes the reversible transfer of the terminal phosphate group between ATP and AMP. Plays an important role in cellular energy homeostasis and in adenine nucleotide metabolism. This chain is Adenylate kinase, found in Rickettsia prowazekii (strain Madrid E).